Consider the following 124-residue polypeptide: U-scoloptoxin-Er5d (124 aa).

The N-terminal stretch at 1–22 (MKTNCEFPLLCLLIVLVANVEG) is a signal peptide. Positions 23–94 (EVEDNELKMV…KRLWRNWERR (72 aa)) are excised as a propeptide. RLWRNWE repeat units follow at residues 34–40 (RLWRNWE), 61–67 (RLWRNWE), and 86–92 (RLWRNWE). The residue at position 95 (Q95) is a Pyrrolidone carboxylic acid. An RLWRNWE 4; approximate repeat occupies 107-113 (ELWRNWE). Positions 112 to 124 (WEDLKRRQVGRFE) are excised as a propeptide.

It belongs to the scoloptoxin-08 family. Expressed by the venom gland.

Its subcellular location is the secreted. The sequence is that of U-scoloptoxin-Er5d from Ethmostigmus rubripes (Giant centipede).